The following is a 242-amino-acid chain: Biosynthetic peptidoglycan transglycosylase (242 aa).

Residues 19–39 form a helical membrane-spanning segment; the sequence is ILAALAVFWGGGIALFSVVPV.

It belongs to the glycosyltransferase 51 family.

It is found in the cell inner membrane. It catalyses the reaction [GlcNAc-(1-&gt;4)-Mur2Ac(oyl-L-Ala-gamma-D-Glu-L-Lys-D-Ala-D-Ala)](n)-di-trans,octa-cis-undecaprenyl diphosphate + beta-D-GlcNAc-(1-&gt;4)-Mur2Ac(oyl-L-Ala-gamma-D-Glu-L-Lys-D-Ala-D-Ala)-di-trans,octa-cis-undecaprenyl diphosphate = [GlcNAc-(1-&gt;4)-Mur2Ac(oyl-L-Ala-gamma-D-Glu-L-Lys-D-Ala-D-Ala)](n+1)-di-trans,octa-cis-undecaprenyl diphosphate + di-trans,octa-cis-undecaprenyl diphosphate + H(+). The protein operates within cell wall biogenesis; peptidoglycan biosynthesis. Functionally, peptidoglycan polymerase that catalyzes glycan chain elongation from lipid-linked precursors. This chain is Biosynthetic peptidoglycan transglycosylase, found in Salmonella typhi.